Reading from the N-terminus, the 892-residue chain is Translation initiation factor IF-2 (892 aa).

2 disordered regions span residues 32–102 and 114–300; these read LAQA…PGDA and KAPE…KQAE. Polar residues predominate over residues 35–48; sequence AGSSDTKNSPASKA. A compositionally biased stretch (basic and acidic residues) spans 139-166; the sequence is QEEKKESSEETSPERVEETLIIRTRTEP. Low complexity predominate over residues 200–211; it reads AASTEETTQQQP. Residues 212–224 are compositionally biased toward polar residues; that stretch reads RQNDAASYNNKQQ. Positions 225–238 are enriched in low complexity; sequence PSGTSSRPASSAPS. Residues 252–276 are compositionally biased toward basic and acidic residues; that stretch reads RGSERDRSKRSDESVKAFTGRDRYG. Residues 397-566 form the tr-type G domain; the sequence is IRSPIVAFMG…ALQAEVLELK (170 aa). Positions 406-413 are G1; sequence GHVDHGKT. 406-413 is a binding site for GTP; the sequence is GHVDHGKT. A G2 region spans residues 431–435; sequence AITQH. Positions 452–455 are G3; it reads DTPG. Residues 452–456 and 506–509 each bind GTP; these read DTPGH and NKCD. The tract at residues 506–509 is G4; it reads NKCD. The tract at residues 542-544 is G5; that stretch reads SAK.

This sequence belongs to the TRAFAC class translation factor GTPase superfamily. Classic translation factor GTPase family. IF-2 subfamily.

It localises to the cytoplasm. Functionally, one of the essential components for the initiation of protein synthesis. Protects formylmethionyl-tRNA from spontaneous hydrolysis and promotes its binding to the 30S ribosomal subunits. Also involved in the hydrolysis of GTP during the formation of the 70S ribosomal complex. The chain is Translation initiation factor IF-2 from Chlamydia trachomatis serovar A (strain ATCC VR-571B / DSM 19440 / HAR-13).